A 296-amino-acid polypeptide reads, in one-letter code: Trimeric intracellular cation channel type A (296 aa).

Residues 1-19 (MELPGALQLGELAAAFASV) lie on the Lumenal side of the membrane. Residues 20 to 37 (PVFPLFDAAYFIVSVLYL) form a helical membrane-spanning segment. The Cytoplasmic portion of the chain corresponds to 38-51 (KYEPGAVEMSRKSP). A helical membrane pass occupies residues 52 to 73 (FASWLCAMLHCFGSYILADLLL). Gly-74 contacts Ca(2+). Topologically, residues 74–85 (GESPIHYFSNNS) are lumenal. A helical membrane pass occupies residues 86 to 103 (SVILATAVWYLIFFCPMN). Residues 104–107 (LFYK) are Cytoplasmic-facing. A helical transmembrane segment spans residues 108–126 (CVSFLPVKLIFVAMKEVVR). A 1,2-diacyl-sn-glycero-3-phospho-(1D-myo-inositol-4,5-bisphosphate) is bound by residues Lys-122 and Arg-126. The Lumenal portion of the chain corresponds to 127 to 144 (VRKIAAGVHHAHHQYHHG). Residues 145 to 162 (WFIMMATGWVKGSGVALM) form a helical membrane-spanning segment. Residues 163 to 183 (SNFEQLLRGVWRPETNEILHM) are Cytoplasmic-facing. Residues 184-201 (SFPTKASLYGTVLFTLQQ) traverse the membrane as a helical segment. At 202-209 (THWLPVSE) the chain is on the lumenal side. Residues 210-230 (ANLVFFFTMFMIVCKVFMTAT) form a helical membrane-spanning segment. The Cytoplasmic portion of the chain corresponds to 231 to 273 (HSHASPFAPVEGFICPVFFGSVSSGHTSHHNQHGHSHEASYQP). Residues 256–296 (HTSHHNQHGHSHEASYQPPPPVKSKEELNEGTRKRKAKKAE) form a disordered region. Residues 278 to 287 (KSKEELNEGT) are compositionally biased toward basic and acidic residues.

This sequence belongs to the TMEM38 family. In terms of assembly, homotrimer; conformation seems to be controled by binding to diacylglycerol (DAG).

Its subcellular location is the sarcoplasmic reticulum membrane. The protein localises to the nucleus membrane. The enzyme catalyses K(+)(in) = K(+)(out). Its activity is regulated as follows. Channel activity is activated by a change of voltage within the sarcoplasmic reticulum lumen and blocked by luminal high Ca(2+) levels. Functionally, intracellular monovalent cation channel required for maintenance of rapid intracellular calcium release. Acts as a potassium counter-ion channel that functions in synchronization with calcium release from intracellular stores. Opened by a change of voltage within the sarcoplasmic reticulum lumen. This is Trimeric intracellular cation channel type A (TMEM38A) from Gallus gallus (Chicken).